Consider the following 344-residue polypeptide: GTPase Obg (344 aa).

Residues 1-12 (MFVDSASFSVSS) are compositionally biased toward polar residues. Residues 1 to 36 (MFVDSASFSVSSGKGGPGCASFRREKHVPLGGPDGG) form a disordered region. Positions 1 to 158 (MFVDSASFSV…RNIRLELKLI (158 aa)) constitute an Obg domain. The region spanning 159–341 (ADVGLVGFPN…LKFGLLEILK (183 aa)) is the OBG-type G domain. GTP contacts are provided by residues 165-172 (GFPNVGKS), 190-194 (FTTLT), 212-215 (DIPG), 280-283 (TRLD), and 322-324 (SSV). Residues Ser-172 and Thr-192 each contribute to the Mg(2+) site.

Belongs to the TRAFAC class OBG-HflX-like GTPase superfamily. OBG GTPase family. In terms of assembly, monomer. The cofactor is Mg(2+).

It localises to the cytoplasm. Its function is as follows. An essential GTPase which binds GTP, GDP and possibly (p)ppGpp with moderate affinity, with high nucleotide exchange rates and a fairly low GTP hydrolysis rate. Plays a role in control of the cell cycle, stress response, ribosome biogenesis and in those bacteria that undergo differentiation, in morphogenesis control. The polypeptide is GTPase Obg (Campylobacter fetus subsp. fetus (strain 82-40)).